The following is a 219-amino-acid chain: 2-phospho-L-lactate guanylyltransferase (219 aa).

This sequence belongs to the CofC family. Homodimer.

It carries out the reaction (2S)-2-phospholactate + GTP + H(+) = (2S)-lactyl-2-diphospho-5'-guanosine + diphosphate. Its pathway is cofactor biosynthesis; coenzyme F420 biosynthesis. Guanylyltransferase that catalyzes the activation of (2S)-2-phospholactate (2-PL) as (2S)-lactyl-2-diphospho-5'-guanosine, via the condensation of 2-PL with GTP. It is involved in the biosynthesis of coenzyme F420, a hydride carrier cofactor. In Methanocella arvoryzae (strain DSM 22066 / NBRC 105507 / MRE50), this protein is 2-phospho-L-lactate guanylyltransferase.